A 366-amino-acid polypeptide reads, in one-letter code: L-Ala-D/L-Glu epimerase (366 aa).

3 residues coordinate substrate: Arg-24, Thr-135, and Lys-160. Residue Lys-162 is the Proton acceptor; specific for (R)-substrate epimerization of the active site. 3 residues coordinate Mg(2+): Asp-191, Glu-219, and Asp-244. The active-site Proton acceptor; specific for (S)-substrate epimerization is the Lys-268. Substrate is bound by residues Ser-296, Ile-298, Asp-321, and Asp-323.

Belongs to the mandelate racemase/muconate lactonizing enzyme family. In terms of assembly, homooctamer; tetramer of dimers. Mg(2+) serves as cofactor.

The catalysed reaction is L-alanyl-L-glutamate = L-alanyl-D-glutamate. The protein operates within cell wall degradation; peptidoglycan degradation. Its function is as follows. Catalyzes the epimerization of L-Ala-D-Glu to L-Ala-L-Glu and has probably a role in the metabolism of the murein peptide, of which L-Ala-D-Glu is a component. Is also able to catalyze the reverse reaction and the epimerization of the other Ala-X dipeptides L-Ala-L-Asp, L-Ala-L-Leu, L-Ala-L-Met, and L-Ala-L-Ser. Is not able to epimerize other L-Ala-X dipeptides. Is also active with L-Ser-L-Glu and, oddly, L-Pro-L-Glu, but not with L-Glu-L-Glu, L-Lys-L-Glu, L-Lys-L-Ala, or D-Ala-D-Ala. The protein is L-Ala-D/L-Glu epimerase (ykfB) of Bacillus subtilis (strain 168).